Reading from the N-terminus, the 93-residue chain is Large ribosomal subunit protein bL31 (93 aa).

The tract at residues 72 to 93 is disordered; that stretch reads VKTVSSNADNQKETTEELIKNK. Over residues 81-93 the composition is skewed to basic and acidic residues; that stretch reads NQKETTEELIKNK.

It belongs to the bacterial ribosomal protein bL31 family. Type A subfamily. In terms of assembly, part of the 50S ribosomal subunit.

Binds the 23S rRNA. The polypeptide is Large ribosomal subunit protein bL31 (Onion yellows phytoplasma (strain OY-M)).